Reading from the N-terminus, the 243-residue chain is MPELVWLNPHDTVFPPTTSALEDPNGLLAVGGDLSPARLIAAYKKGIFPWFDDSQPILWWSPDPRMVLLPQNLHLGKTLKKLAKKQAFKITIDTHFSDVMQGCAQPRADQDGTWITTDMENAYLELHKLGYAHSIEAWQDGELVGGLYGIAINRVFYGESMFSKVSGASKIAFANLATQLASWGFYAIDCQVATEYLASFGAAEMPRVEFEQILQQSLQSQPPKCQIEGWQNSWNMPDYGQLF.

Belongs to the L/F-transferase family.

The protein resides in the cytoplasm. It catalyses the reaction N-terminal L-lysyl-[protein] + L-leucyl-tRNA(Leu) = N-terminal L-leucyl-L-lysyl-[protein] + tRNA(Leu) + H(+). The enzyme catalyses N-terminal L-arginyl-[protein] + L-leucyl-tRNA(Leu) = N-terminal L-leucyl-L-arginyl-[protein] + tRNA(Leu) + H(+). It carries out the reaction L-phenylalanyl-tRNA(Phe) + an N-terminal L-alpha-aminoacyl-[protein] = an N-terminal L-phenylalanyl-L-alpha-aminoacyl-[protein] + tRNA(Phe). Functions in the N-end rule pathway of protein degradation where it conjugates Leu, Phe and, less efficiently, Met from aminoacyl-tRNAs to the N-termini of proteins containing an N-terminal arginine or lysine. This chain is Leucyl/phenylalanyl-tRNA--protein transferase, found in Saccharophagus degradans (strain 2-40 / ATCC 43961 / DSM 17024).